The sequence spans 193 residues: ATP-dependent Clp protease proteolytic subunit (193 aa).

Residue serine 98 is the Nucleophile of the active site. The active site involves histidine 123.

This sequence belongs to the peptidase S14 family. In terms of assembly, fourteen ClpP subunits assemble into 2 heptameric rings which stack back to back to give a disk-like structure with a central cavity, resembling the structure of eukaryotic proteasomes.

Its subcellular location is the cytoplasm. It carries out the reaction Hydrolysis of proteins to small peptides in the presence of ATP and magnesium. alpha-casein is the usual test substrate. In the absence of ATP, only oligopeptides shorter than five residues are hydrolyzed (such as succinyl-Leu-Tyr-|-NHMec, and Leu-Tyr-Leu-|-Tyr-Trp, in which cleavage of the -Tyr-|-Leu- and -Tyr-|-Trp bonds also occurs).. Cleaves peptides in various proteins in a process that requires ATP hydrolysis. Has a chymotrypsin-like activity. Plays a major role in the degradation of misfolded proteins. The sequence is that of ATP-dependent Clp protease proteolytic subunit from Pasteurella multocida (strain Pm70).